A 379-amino-acid chain; its full sequence is UDP-N-acetylglucosamine--N-acetylmuramyl-(pentapeptide) pyrophosphoryl-undecaprenol N-acetylglucosamine transferase (379 aa).

Residues 13–15, Asn-123, Arg-166, Ser-194, and Gln-295 each bind UDP-N-acetyl-alpha-D-glucosamine; that span reads TGG.

Belongs to the glycosyltransferase 28 family. MurG subfamily.

Its subcellular location is the cell inner membrane. It catalyses the reaction di-trans,octa-cis-undecaprenyl diphospho-N-acetyl-alpha-D-muramoyl-L-alanyl-D-glutamyl-meso-2,6-diaminopimeloyl-D-alanyl-D-alanine + UDP-N-acetyl-alpha-D-glucosamine = di-trans,octa-cis-undecaprenyl diphospho-[N-acetyl-alpha-D-glucosaminyl-(1-&gt;4)]-N-acetyl-alpha-D-muramoyl-L-alanyl-D-glutamyl-meso-2,6-diaminopimeloyl-D-alanyl-D-alanine + UDP + H(+). The protein operates within cell wall biogenesis; peptidoglycan biosynthesis. In terms of biological role, cell wall formation. Catalyzes the transfer of a GlcNAc subunit on undecaprenyl-pyrophosphoryl-MurNAc-pentapeptide (lipid intermediate I) to form undecaprenyl-pyrophosphoryl-MurNAc-(pentapeptide)GlcNAc (lipid intermediate II). The polypeptide is UDP-N-acetylglucosamine--N-acetylmuramyl-(pentapeptide) pyrophosphoryl-undecaprenol N-acetylglucosamine transferase (Rhodospirillum centenum (strain ATCC 51521 / SW)).